The following is a 419-amino-acid chain: UDP-arabinose 4-epimerase 1 (419 aa).

Residues 1-21 form a disordered region; the sequence is MFSFGRARSQGRQNRSMSLGG. Residues 1–32 are Cytoplasmic-facing; sequence MFSFGRARSQGRQNRSMSLGGLDYADPKKKNN. Residues 33–51 traverse the membrane as a helical; Signal-anchor for type II membrane protein segment; sequence YLGKILLTASLTALCIFML. Over 52–419 the chain is Lumenal; sequence KQSPTFNTPS…GLTTSSVSVY (368 aa). 72–103 serves as a coordination point for NAD(+); it reads HVLVTGGAGYIGSHAALRLLKESYRVTIVDNL. The active-site Proton acceptor is Y220.

The protein belongs to the NAD(P)-dependent epimerase/dehydratase family. Requires NAD(+) as cofactor. In terms of tissue distribution, high expression in roots. Also found in leaves, stems, flowers, and siliques.

It localises to the golgi apparatus. The protein resides in the golgi stack membrane. The enzyme catalyses UDP-beta-L-arabinopyranose = UDP-alpha-D-xylose. The protein operates within nucleotide-sugar biosynthesis; UDP-L-arabinose biosynthesis; UDP-L-arabinose from UDP-alpha-D-xylose: step 1/1. It functions in the pathway cell wall biogenesis; cell wall polysaccharide biosynthesis. Functionally, acts as a UDP-D-xylose 4-epimerase but lacks both UDP-D-glucose and UDP-D-glucuronic acid 4-epimerase activities in vitro. This Arabidopsis thaliana (Mouse-ear cress) protein is UDP-arabinose 4-epimerase 1.